The following is a 376-amino-acid chain: TATA box-binding protein-like 2 (376 aa).

Residues 103–184 form a disordered region; that stretch reads PDEVTQENKD…SDSLSLASIT (82 aa). The segment covering 108–122 has biased composition (basic and acidic residues); the sequence is QENKDQPVISKHETE. The segment covering 126–159 has biased composition (low complexity); it reads ESQSPQSRLPSPSEQDVGLGLNSSSLSNSHSQLH. Residues 175 to 184 are compositionally biased toward polar residues; that stretch reads SDSLSLASIT.

Belongs to the TBP family. As to quaternary structure, interacts with TAF3.

It localises to the cytoplasm. It is found in the nucleus. Functionally, transcription factor required in complex with TAF3 for the differentiation of myoblasts into myocytes. The complex replaces TFIID at specific promoters at an early stage in the differentiation process. The chain is TATA box-binding protein-like 2 from Pan troglodytes (Chimpanzee).